The chain runs to 401 residues: Elongation factor Tu (401 aa).

Positions 10 to 211 (KPHLNVGTIG…ALDTFVPNPK (202 aa)) constitute a tr-type G domain. The tract at residues 19–26 (GHVDHGKT) is G1. Position 19-26 (19-26 (GHVDHGKT)) interacts with GTP. Position 26 (T26) interacts with Mg(2+). Residues 62-66 (GITIA) are G2. Positions 83-86 (DCPG) are G3. GTP-binding positions include 83–87 (DCPGH) and 138–141 (NKAD). The segment at 138–141 (NKAD) is G4. A G5 region spans residues 179–181 (SAV).

It belongs to the TRAFAC class translation factor GTPase superfamily. Classic translation factor GTPase family. EF-Tu/EF-1A subfamily. Monomer.

The protein resides in the cytoplasm. It carries out the reaction GTP + H2O = GDP + phosphate + H(+). GTP hydrolase that promotes the GTP-dependent binding of aminoacyl-tRNA to the A-site of ribosomes during protein biosynthesis. The sequence is that of Elongation factor Tu from Leptospira borgpetersenii serovar Hardjo-bovis (strain JB197).